The primary structure comprises 450 residues: Phosphoglucosamine mutase (450 aa).

Ser-101 (phosphoserine intermediate) is an active-site residue. The Mg(2+) site is built by Ser-101, Asp-240, Asp-242, and Asp-244. Phosphoserine is present on Ser-101.

The protein belongs to the phosphohexose mutase family. Mg(2+) serves as cofactor. Activated by phosphorylation.

The catalysed reaction is alpha-D-glucosamine 1-phosphate = D-glucosamine 6-phosphate. Functionally, catalyzes the conversion of glucosamine-6-phosphate to glucosamine-1-phosphate. In Streptococcus pneumoniae serotype 4 (strain ATCC BAA-334 / TIGR4), this protein is Phosphoglucosamine mutase.